Here is a 302-residue protein sequence, read N- to C-terminus: Acetaldehyde dehydrogenase 1 (302 aa).

Position 12-15 (S12–I15) interacts with NAD(+). Residue C127 is the Acyl-thioester intermediate of the active site. NAD(+) is bound by residues S158–N166 and N277.

This sequence belongs to the acetaldehyde dehydrogenase family.

The enzyme catalyses acetaldehyde + NAD(+) + CoA = acetyl-CoA + NADH + H(+). The protein is Acetaldehyde dehydrogenase 1 of Mycobacteroides abscessus (strain ATCC 19977 / DSM 44196 / CCUG 20993 / CIP 104536 / JCM 13569 / NCTC 13031 / TMC 1543 / L948) (Mycobacterium abscessus).